A 281-amino-acid chain; its full sequence is MDKETQMMLVPQGSIEGYIRAANEYPMLTAEEEKELAERLYYHEDLDAAKKLILSHLRFVIHVARGYSGYGLPQADLIQEGNIGLMKAVKRFNPEVGVRLVSFAVHWIKAEIHEYVLRNWRIVKVATTKAQRKLFFNLRKTKQRLGWFNENEVDMVANELGVSKEDVIEMESRMSGADVGFDLPTDDAETETYSPALYLEDKSSNFAAELENENFESQATEQLGAALQSLDARSQDIIKARWLDDNKATLHDLAAKYNVSAERIRQLETNALKKLKSAVNF.

The interval 52 to 121 is sigma-70 factor domain-2; the sequence is LILSHLRFVI…IHEYVLRNWR (70 aa). An Interaction with polymerase core subunit RpoC motif is present at residues 76–79; that stretch reads DLIQ. Positions 226 to 277 are sigma-70 factor domain-4; sequence ALQSLDARSQDIIKARWLDDNKATLHDLAAKYNVSAERIRQLETNALKKLKS. A DNA-binding region (H-T-H motif) is located at residues 250 to 269; the sequence is LHDLAAKYNVSAERIRQLET.

The protein belongs to the sigma-70 factor family. RpoH subfamily. Interacts with the RNA polymerase core enzyme.

The protein resides in the cytoplasm. In terms of biological role, sigma factors are initiation factors that promote the attachment of RNA polymerase to specific initiation sites and are then released. This sigma factor is involved in regulation of expression of heat shock genes. The protein is RNA polymerase sigma factor RpoH of Haemophilus influenzae (strain ATCC 51907 / DSM 11121 / KW20 / Rd).